A 287-amino-acid polypeptide reads, in one-letter code: Small ribosomal subunit protein uS2 (287 aa).

Residues 233–287 (HKAPQDDIEPMAEWEKQLLQSGDSSGETRPISGTDRPLDGDLSKGPAPQDEELSD) are disordered. Polar residues predominate over residues 250–259 (LLQSGDSSGE).

Belongs to the universal ribosomal protein uS2 family.

The sequence is that of Small ribosomal subunit protein uS2 from Tropheryma whipplei (strain TW08/27) (Whipple's bacillus).